Reading from the N-terminus, the 146-residue chain is uncharacterized protein (146 aa).

Positions 7–146 constitute an N-acetyltransferase domain; that stretch reads LDINYKTDEL…DGHDVLVWTP (140 aa).

This is an uncharacterized protein from Staphylococcus saprophyticus subsp. saprophyticus (strain ATCC 15305 / DSM 20229 / NCIMB 8711 / NCTC 7292 / S-41).